The following is a 267-amino-acid chain: Undecaprenyl-diphosphatase (267 aa).

The next 7 membrane-spanning stretches (helical) occupy residues 1–21, 40–60, 85–105, 112–132, 189–209, 219–239, and 245–265; these read MSLF…FLPI, GQAI…LYFW, LAFL…FLEV, LRSI…LYWA, AMLM…AEVI, DGAI…TLMF, and VSFT…LVIA.

Belongs to the UppP family.

It localises to the cell inner membrane. The catalysed reaction is di-trans,octa-cis-undecaprenyl diphosphate + H2O = di-trans,octa-cis-undecaprenyl phosphate + phosphate + H(+). Its function is as follows. Catalyzes the dephosphorylation of undecaprenyl diphosphate (UPP). Confers resistance to bacitracin. This chain is Undecaprenyl-diphosphatase, found in Jannaschia sp. (strain CCS1).